The chain runs to 162 residues: NADH-quinone oxidoreductase subunit I (162 aa).

4Fe-4S ferredoxin-type domains are found at residues 53-83 and 93-122; these read LRRYPNGEERCIACKLCEAVCPAMAITIESE and TRYDIDLTKCIFCGFCEESCPVDSIVETHI. The [4Fe-4S] cluster site is built by Cys63, Cys66, Cys69, Cys73, Cys102, Cys105, Cys108, and Cys112.

Belongs to the complex I 23 kDa subunit family. As to quaternary structure, NDH-1 is composed of 14 different subunits. Subunits NuoA, H, J, K, L, M, N constitute the membrane sector of the complex. Requires [4Fe-4S] cluster as cofactor.

The protein localises to the cell inner membrane. The enzyme catalyses a quinone + NADH + 5 H(+)(in) = a quinol + NAD(+) + 4 H(+)(out). Functionally, NDH-1 shuttles electrons from NADH, via FMN and iron-sulfur (Fe-S) centers, to quinones in the respiratory chain. The immediate electron acceptor for the enzyme in this species is believed to be ubiquinone. Couples the redox reaction to proton translocation (for every two electrons transferred, four hydrogen ions are translocated across the cytoplasmic membrane), and thus conserves the redox energy in a proton gradient. This is NADH-quinone oxidoreductase subunit I from Herminiimonas arsenicoxydans.